The chain runs to 433 residues: MSIDIDWERATSGPDGELLAERIRSFIHDKFQQIVLPRFIRSVQVTSFNFGTIPPELEIRDLSDPFPDFFEDDDENFSDSSEERSPTREPVDRYGNRVDSWQANSPGGPGGQMYGRVGFNQPLRMPEWEEHTGISPLRGPMNFGDINPYLFPRSGTPGIPGGTSNLGYYMPLSGLSNSQTPLGAVARGNPFSGGWPDAHGARPSRRRSEAEPDSAQSRPSTANTGNTLPSRDSMSVSDPHHCHASQGMSNNQGQVLEPNIPPTSPNHPLDDTPPRRMREQKAEDFQVFCRTKYAGNISLSLTAEILLDYPMPSFVGLPLKLNITGLTFDAVAVIAYIRRRIHFCFLSPDDADTLMGPETAAGSGGGDTLEPNSPRRKHSSLLREIRVESEIGRKENGKQALKNVGKLEKFVLEQVRRIFEEEFVYPSFWTFLI.

The 433-residue stretch at 1–433 folds into the SMP-LTD domain; sequence MSIDIDWERA…VYPSFWTFLI (433 aa). Disordered stretches follow at residues 62–113, 180–279, and 356–376; these read LSDP…GGQM, TPLG…RMRE, and GPETAAGSGGGDTLEPNSPRR. Positions 81-96 are enriched in basic and acidic residues; it reads SEERSPTREPVDRYGN. Over residues 214 to 236 the composition is skewed to polar residues; sequence SAQSRPSTANTGNTLPSRDSMSV. Basic and acidic residues predominate over residues 268 to 279; sequence PLDDTPPRRMRE.

The protein belongs to the MDM12 family. As to quaternary structure, component of the ER-mitochondria encounter structure (ERMES) or MDM complex, composed of MMM1, MDM10, MDM12 and MDM34. An MMM1 homodimer associates with one molecule of MDM12 on each side in a pairwise head-to-tail manner, and the SMP-LTD domains of MMM1 and MDM12 generate a continuous hydrophobic tunnel for phospholipid trafficking.

It is found in the mitochondrion outer membrane. It localises to the endoplasmic reticulum membrane. Functionally, component of the ERMES/MDM complex, which serves as a molecular tether to connect the endoplasmic reticulum (ER) and mitochondria. Components of this complex are involved in the control of mitochondrial shape and protein biogenesis, and function in nonvesicular lipid trafficking between the ER and mitochondria. MDM12 is required for the interaction of the ER-resident membrane protein MMM1 and the outer mitochondrial membrane-resident beta-barrel protein MDM10. The MDM12-MMM1 subcomplex functions in the major beta-barrel assembly pathway that is responsible for biogenesis of all mitochondrial outer membrane beta-barrel proteins, and acts in a late step after the SAM complex. The MDM10-MDM12-MMM1 subcomplex further acts in the TOM40-specific pathway after the action of the MDM12-MMM1 complex. Essential for establishing and maintaining the structure of mitochondria and maintenance of mtDNA nucleoids. This chain is Mitochondrial distribution and morphology protein 12, found in Ajellomyces capsulatus (strain NAm1 / WU24) (Darling's disease fungus).